The primary structure comprises 290 residues: 2-dehydropantoate 2-reductase (290 aa).

Residues 8-13 (GPGAVG), N98, and A124 each bind NADP(+). Residue N98 coordinates substrate. K175 functions as the Proton donor in the catalytic mechanism. Substrate-binding residues include N179 and S244. E256 contributes to the NADP(+) binding site.

It belongs to the ketopantoate reductase family.

The protein resides in the cytoplasm. The catalysed reaction is (R)-pantoate + NADP(+) = 2-dehydropantoate + NADPH + H(+). Its pathway is cofactor biosynthesis; (R)-pantothenate biosynthesis; (R)-pantoate from 3-methyl-2-oxobutanoate: step 2/2. Catalyzes the NADPH-dependent reduction of ketopantoate into pantoic acid. This Caulobacter vibrioides (strain ATCC 19089 / CIP 103742 / CB 15) (Caulobacter crescentus) protein is 2-dehydropantoate 2-reductase.